Here is a 458-residue protein sequence, read N- to C-terminus: Serine--tRNA ligase (458 aa).

255–257 lines the L-serine pocket; sequence TSE. ATP-binding positions include 286-288 and Val302; that span reads RKE. Residue Glu309 coordinates L-serine. 373 to 376 serves as a coordination point for ATP; it reads ELVS. Thr409 is an L-serine binding site.

Belongs to the class-II aminoacyl-tRNA synthetase family. Type-1 seryl-tRNA synthetase subfamily. Homodimer. The tRNA molecule binds across the dimer.

The protein resides in the cytoplasm. The enzyme catalyses tRNA(Ser) + L-serine + ATP = L-seryl-tRNA(Ser) + AMP + diphosphate + H(+). It carries out the reaction tRNA(Sec) + L-serine + ATP = L-seryl-tRNA(Sec) + AMP + diphosphate + H(+). Its pathway is aminoacyl-tRNA biosynthesis; selenocysteinyl-tRNA(Sec) biosynthesis; L-seryl-tRNA(Sec) from L-serine and tRNA(Sec): step 1/1. Catalyzes the attachment of serine to tRNA(Ser). Is also able to aminoacylate tRNA(Sec) with serine, to form the misacylated tRNA L-seryl-tRNA(Sec), which will be further converted into selenocysteinyl-tRNA(Sec). The chain is Serine--tRNA ligase from Ignicoccus hospitalis (strain KIN4/I / DSM 18386 / JCM 14125).